The sequence spans 210 residues: Na(+)-translocating NADH-quinone reductase subunit D (210 aa).

A run of 6 helical transmembrane segments spans residues 10–30 (VLFG…GVCS), 42–62 (LVMS…ISMI), 72–92 (IIVQ…ILKA), 103–123 (VFVG…AFAM), 143–163 (FVLI…ILGF), and 178–198 (NGLL…IWFI).

It belongs to the NqrDE/RnfAE family. In terms of assembly, composed of six subunits; NqrA, NqrB, NqrC, NqrD, NqrE and NqrF.

The protein localises to the cell inner membrane. It catalyses the reaction a ubiquinone + n Na(+)(in) + NADH + H(+) = a ubiquinol + n Na(+)(out) + NAD(+). NQR complex catalyzes the reduction of ubiquinone-1 to ubiquinol by two successive reactions, coupled with the transport of Na(+) ions from the cytoplasm to the periplasm. NqrA to NqrE are probably involved in the second step, the conversion of ubisemiquinone to ubiquinol. The protein is Na(+)-translocating NADH-quinone reductase subunit D of Pseudoalteromonas atlantica (strain T6c / ATCC BAA-1087).